We begin with the raw amino-acid sequence, 37 residues long: Large ribosomal subunit protein bL36 (37 aa).

The protein belongs to the bacterial ribosomal protein bL36 family.

This Tropheryma whipplei (strain Twist) (Whipple's bacillus) protein is Large ribosomal subunit protein bL36.